Reading from the N-terminus, the 147-residue chain is Large ribosomal subunit protein uL13 (147 aa).

The protein belongs to the universal ribosomal protein uL13 family. In terms of assembly, part of the 50S ribosomal subunit.

This protein is one of the early assembly proteins of the 50S ribosomal subunit, although it is not seen to bind rRNA by itself. It is important during the early stages of 50S assembly. In Kineococcus radiotolerans (strain ATCC BAA-149 / DSM 14245 / SRS30216), this protein is Large ribosomal subunit protein uL13.